Reading from the N-terminus, the 581-residue chain is Pentatricopeptide repeat-containing protein At3g56550 (581 aa).

PPR repeat units follow at residues 70–104 (STSDWNYLIRGFSNSSSPLNSILFYNRMLLSSVSR), 106–140 (DLFTFNFALKSCERIKSIPKCLEIHGSVIRSGFLD), 141–171 (DAIVATSLVRCYSANGSVEIASKVFDEMPVR), 172–206 (DLVSWNVMICCFSHVGLHNQALSMYKRMGNEGVCG), 207–241 (DSYTLVALLSSCAHVSALNMGVMLHRIACDIRCES), 242–272 (CVFVSNALIDMYAKCGSLENAIGVFNGMRKR), 273–307 (DVLTWNSMIIGYGVHGHGVEAISFFRKMVASGVRP), 308–338 (NAITFLGLLLGCSHQGLVKEGVEHFEIMSSQ), and 344–378 (NVKHYGCMVDLYGRAGQLENSLEMIYASSCHEDPV). The type E motif stretch occupies residues 379–454 (LWRTLLGSCK…VPGWSWIEIG (76 aa)). Residues 455–485 (DQVHKFVVDDKMHPESAVIYSELGEVINRAI) are type E(+) motif. The interval 486-581 (LAGYKPEDSN…DGICSCNDYW (96 aa)) is type DYW motif.

The protein belongs to the PPR family. PCMP-H subfamily.

This is Pentatricopeptide repeat-containing protein At3g56550 (PCMP-H80) from Arabidopsis thaliana (Mouse-ear cress).